A 270-amino-acid chain; its full sequence is Glucosamine-6-phosphate deaminase (270 aa).

The active-site Proton acceptor; for enolization step is Asp68. The active-site For ring-opening step is Asp145. Residue His147 is the Proton acceptor; for ring-opening step of the active site. The active-site For ring-opening step is Glu152.

The protein belongs to the glucosamine/galactosamine-6-phosphate isomerase family. NagB subfamily.

It carries out the reaction alpha-D-glucosamine 6-phosphate + H2O = beta-D-fructose 6-phosphate + NH4(+). It functions in the pathway amino-sugar metabolism; N-acetylneuraminate degradation; D-fructose 6-phosphate from N-acetylneuraminate: step 5/5. In terms of biological role, catalyzes the reversible isomerization-deamination of glucosamine 6-phosphate (GlcN6P) to form fructose 6-phosphate (Fru6P) and ammonium ion. The polypeptide is Glucosamine-6-phosphate deaminase (Bifidobacterium longum (strain DJO10A)).